A 671-amino-acid chain; its full sequence is DNA ligase (671 aa).

Residues 32–36 (DAEYD), 81–82 (SL), and E113 each bind NAD(+). Residue K115 is the N6-AMP-lysine intermediate of the active site. NAD(+) contacts are provided by R136, E173, K290, and K314. Residues C408, C411, C426, and C432 each coordinate Zn(2+). The BRCT domain occupies 593-671 (EIDSPFAGKT…EAEMIRLLGA (79 aa)).

Belongs to the NAD-dependent DNA ligase family. LigA subfamily. It depends on Mg(2+) as a cofactor. Mn(2+) serves as cofactor.

It carries out the reaction NAD(+) + (deoxyribonucleotide)n-3'-hydroxyl + 5'-phospho-(deoxyribonucleotide)m = (deoxyribonucleotide)n+m + AMP + beta-nicotinamide D-nucleotide.. In terms of biological role, DNA ligase that catalyzes the formation of phosphodiester linkages between 5'-phosphoryl and 3'-hydroxyl groups in double-stranded DNA using NAD as a coenzyme and as the energy source for the reaction. It is essential for DNA replication and repair of damaged DNA. The polypeptide is DNA ligase (Salmonella gallinarum (strain 287/91 / NCTC 13346)).